The chain runs to 217 residues: Oxygen-insensitive NAD(P)H nitroreductase (217 aa).

FMN is bound at residue 10–14; sequence RHSTK. The NAD(+) site is built by lysine 14, threonine 41, threonine 67, asparagine 71, lysine 74, and arginine 107. Asparagine 71 is a binding site for FMN. FMN contacts are provided by residues 165–166 and 205–207; these read EG and KSR.

It belongs to the nitroreductase family. As to quaternary structure, homodimer. It depends on FMN as a cofactor.

Reduction of a variety of nitroaromatic compounds using NADH (and to lesser extent NADPH) as source of reducing equivalents; two electrons are transferred. The polypeptide is Oxygen-insensitive NAD(P)H nitroreductase (Enterobacter cloacae).